A 94-amino-acid polypeptide reads, in one-letter code: Mitochondrial import inner membrane translocase subunit Tim8 A (94 aa).

The Twin CX3C motif motif lies at 47–70 (CWDKCIDRPGNKLDSRTESCLVSC). 2 disulfide bridges follow: Cys-47/Cys-70 and Cys-51/Cys-66.

This sequence belongs to the small Tim family. In terms of assembly, heterohexamer; composed of 3 copies of TIMM8A and 3 copies of TIMM13, named soluble 70 kDa complex. Associates with the TIM22 complex, whose core is composed of TIMM22.

Its subcellular location is the mitochondrion inner membrane. In terms of biological role, mitochondrial intermembrane chaperone that participates in the import and insertion of some multi-pass transmembrane proteins into the mitochondrial inner membrane. Also required for the transfer of beta-barrel precursors from the TOM complex to the sorting and assembly machinery (SAM complex) of the outer membrane. Acts as a chaperone-like protein that protects the hydrophobic precursors from aggregation and guide them through the mitochondrial intermembrane space. The TIMM8-TIMM13 complex mediates the import of some proteins while the predominant TIMM9-TIMM10 70 kDa complex mediates the import of much more proteins. The protein is Mitochondrial import inner membrane translocase subunit Tim8 A (timm8a) of Xenopus laevis (African clawed frog).